Reading from the N-terminus, the 153-residue chain is Endoribonuclease YbeY (153 aa).

Zn(2+)-binding residues include H118, H122, and H128.

Belongs to the endoribonuclease YbeY family. Requires Zn(2+) as cofactor.

It is found in the cytoplasm. Single strand-specific metallo-endoribonuclease involved in late-stage 70S ribosome quality control and in maturation of the 3' terminus of the 16S rRNA. This chain is Endoribonuclease YbeY, found in Clostridioides difficile (strain 630) (Peptoclostridium difficile).